Reading from the N-terminus, the 467-residue chain is F-box protein pof9 (467 aa).

The F-box domain occupies 3-49 (KSPFLELSYDILLEISTYLDYKDIVHLSETCKSLSYVFDDKTIWHRF). RCC1 repeat units follow at residues 77-131 (RGYA…LLNE), 302-354 (ETFT…YLTS), and 355-417 (DHSI…AAGG).

Interacts with skp1.

It localises to the cytoplasm. Its subcellular location is the nucleus. The polypeptide is F-box protein pof9 (pof9) (Schizosaccharomyces pombe (strain 972 / ATCC 24843) (Fission yeast)).